The chain runs to 388 residues: Formate-dependent phosphoribosylglycinamide formyltransferase (388 aa).

Residues 20–21 and Glu80 each bind N(1)-(5-phospho-beta-D-ribosyl)glycinamide; that span reads EL. ATP is bound by residues Arg112, Lys153, 158–163, 193–196, and Glu201; these read SSGKGQ and EEFI. One can recognise an ATP-grasp domain in the interval 117–306; the sequence is RLAFEKLGLR…EFEIHARAIL (190 aa). Mg(2+) is bound by residues Glu265 and Glu277. N(1)-(5-phospho-beta-D-ribosyl)glycinamide-binding positions include Asp284, Lys352, and 359-360; that span reads RR.

The protein belongs to the PurK/PurT family. Homodimer.

It catalyses the reaction N(1)-(5-phospho-beta-D-ribosyl)glycinamide + formate + ATP = N(2)-formyl-N(1)-(5-phospho-beta-D-ribosyl)glycinamide + ADP + phosphate + H(+). It functions in the pathway purine metabolism; IMP biosynthesis via de novo pathway; N(2)-formyl-N(1)-(5-phospho-D-ribosyl)glycinamide from N(1)-(5-phospho-D-ribosyl)glycinamide (formate route): step 1/1. In terms of biological role, involved in the de novo purine biosynthesis. Catalyzes the transfer of formate to 5-phospho-ribosyl-glycinamide (GAR), producing 5-phospho-ribosyl-N-formylglycinamide (FGAR). Formate is provided by PurU via hydrolysis of 10-formyl-tetrahydrofolate. In Methanococcus maripaludis (strain C5 / ATCC BAA-1333), this protein is Formate-dependent phosphoribosylglycinamide formyltransferase.